A 245-amino-acid polypeptide reads, in one-letter code: Small ribosomal subunit protein uS2 (245 aa).

It belongs to the universal ribosomal protein uS2 family.

In Pseudomonas putida (strain ATCC 47054 / DSM 6125 / CFBP 8728 / NCIMB 11950 / KT2440), this protein is Small ribosomal subunit protein uS2.